A 401-amino-acid polypeptide reads, in one-letter code: Argininosuccinate synthase (401 aa).

Ala8–Ser16 is a binding site for ATP. Residue Tyr85 participates in L-citrulline binding. Gly115 is an ATP binding site. L-aspartate is bound by residues Thr117, Asn121, and Asp122. Residue Asn121 participates in L-citrulline binding. Residues Arg125, Ser173, Glu258, and Tyr270 each contribute to the L-citrulline site.

The protein belongs to the argininosuccinate synthase family. Type 1 subfamily. As to quaternary structure, homotetramer.

The protein resides in the cytoplasm. The enzyme catalyses L-citrulline + L-aspartate + ATP = 2-(N(omega)-L-arginino)succinate + AMP + diphosphate + H(+). Its pathway is amino-acid biosynthesis; L-arginine biosynthesis; L-arginine from L-ornithine and carbamoyl phosphate: step 2/3. The chain is Argininosuccinate synthase from Staphylococcus epidermidis (strain ATCC 35984 / DSM 28319 / BCRC 17069 / CCUG 31568 / BM 3577 / RP62A).